A 195-amino-acid chain; its full sequence is MYLINQNGWIEVICGSMFSGKSEELIRRVRRTQFAKQHAIVFKPCIDNRYSEEDVVSHNGLKVKAVPVSASKDIFEHITEEMDVIAIDEVQFFDGDIVEVVQVLANRGYRVIVAGLDQDFRGLPFGQVPQLMAIAEHVTKLQAVCSACGSPASRTQRLIDGEPAAFDDPIILVGASESYEPRCRHCHAVPTNKDK.

Residues 15-22 (GSMFSGKS) and 88-91 (DEVQ) contribute to the ATP site. E89 (proton acceptor) is an active-site residue. Residues C145, C148, C183, and C186 each contribute to the Zn(2+) site.

The protein belongs to the thymidine kinase family. Homotetramer.

The protein resides in the cytoplasm. The enzyme catalyses thymidine + ATP = dTMP + ADP + H(+). The protein is Thymidine kinase of Bacillus cereus (strain AH187).